The following is a 351-amino-acid chain: Phosphoribosylformylglycinamidine cyclo-ligase (351 aa).

The protein belongs to the AIR synthase family.

It is found in the cytoplasm. It catalyses the reaction 2-formamido-N(1)-(5-O-phospho-beta-D-ribosyl)acetamidine + ATP = 5-amino-1-(5-phospho-beta-D-ribosyl)imidazole + ADP + phosphate + H(+). Its pathway is purine metabolism; IMP biosynthesis via de novo pathway; 5-amino-1-(5-phospho-D-ribosyl)imidazole from N(2)-formyl-N(1)-(5-phospho-D-ribosyl)glycinamide: step 2/2. In Burkholderia ambifaria (strain MC40-6), this protein is Phosphoribosylformylglycinamidine cyclo-ligase.